Consider the following 264-residue polypeptide: GTP cyclohydrolase FolE2 (264 aa).

It belongs to the GTP cyclohydrolase IV family.

It carries out the reaction GTP + H2O = 7,8-dihydroneopterin 3'-triphosphate + formate + H(+). It participates in cofactor biosynthesis; 7,8-dihydroneopterin triphosphate biosynthesis; 7,8-dihydroneopterin triphosphate from GTP: step 1/1. In terms of biological role, converts GTP to 7,8-dihydroneopterin triphosphate. This is GTP cyclohydrolase FolE2 from Nitratidesulfovibrio vulgaris (strain ATCC 29579 / DSM 644 / CCUG 34227 / NCIMB 8303 / VKM B-1760 / Hildenborough) (Desulfovibrio vulgaris).